Reading from the N-terminus, the 217-residue chain is Probable transaldolase (217 aa).

Lysine 83 serves as the catalytic Schiff-base intermediate with substrate.

This sequence belongs to the transaldolase family. Type 3B subfamily.

It localises to the cytoplasm. It catalyses the reaction D-sedoheptulose 7-phosphate + D-glyceraldehyde 3-phosphate = D-erythrose 4-phosphate + beta-D-fructose 6-phosphate. Its pathway is carbohydrate degradation; pentose phosphate pathway; D-glyceraldehyde 3-phosphate and beta-D-fructose 6-phosphate from D-ribose 5-phosphate and D-xylulose 5-phosphate (non-oxidative stage): step 2/3. Transaldolase is important for the balance of metabolites in the pentose-phosphate pathway. This chain is Probable transaldolase, found in Ruegeria pomeroyi (strain ATCC 700808 / DSM 15171 / DSS-3) (Silicibacter pomeroyi).